We begin with the raw amino-acid sequence, 329 residues long: MQGSVIEFLKPHLVNIEQISSTHAKVTLEPLERGFGHTLGNALRRILLSSMPGCAVAEVEIDGVLHEYSSKEGVQEDILEVLLNLKGLAVKVSGKNDVTLTLNKSGIGPVLAADITHDGDVEIINPNHVICHLTDKDASINMRIYVQRGRGYVPASARVHSQDEDRPIGRLLVDARFSPVDRIAYNVEAARVEQRTDLDKLIIDMETNGTIDPEEAIRRAATILAEQLDAFVDLRDVRQPEIKEEKPEFDPILLRPVDDLELTVRSANCLKAETIHYIGDLVQRTEVELLKTPNLGKKSLTEIKDVLASRGLSLGMRLENWPPASIAED.

An alpha N-terminal domain (alpha-NTD) region spans residues 1–235; sequence MQGSVIEFLK…EQLDAFVDLR (235 aa). An alpha C-terminal domain (alpha-CTD) region spans residues 249–329; it reads FDPILLRPVD…NWPPASIAED (81 aa).

It belongs to the RNA polymerase alpha chain family. As to quaternary structure, homodimer. The RNAP catalytic core consists of 2 alpha, 1 beta, 1 beta' and 1 omega subunit. When a sigma factor is associated with the core the holoenzyme is formed, which can initiate transcription.

It carries out the reaction RNA(n) + a ribonucleoside 5'-triphosphate = RNA(n+1) + diphosphate. Its function is as follows. DNA-dependent RNA polymerase catalyzes the transcription of DNA into RNA using the four ribonucleoside triphosphates as substrates. This Haemophilus ducreyi (strain 35000HP / ATCC 700724) protein is DNA-directed RNA polymerase subunit alpha.